A 189-amino-acid polypeptide reads, in one-letter code: Nuclear distribution protein nudE homolog 1 (189 aa).

The stretch at 4–121 forms a coiled coil; it reads NLDLETAIQI…LRVSKEEATS (118 aa). Positions 114-126 are enriched in basic and acidic residues; the sequence is VSKEEATSGETRR. Positions 114-139 are disordered; the sequence is VSKEEATSGETRRNTRSLPSQNKKMK.

This sequence belongs to the nudE family. Self-associates. Interacts with PAC1.

The protein localises to the nucleus. It localises to the cytoplasm. It is found in the cytoskeleton. Required for nuclear migration to the bud neck during cell division. Targets cytoplasmic dynein to microtubule plus ends thereby promoting dynein-mediated microtubule sliding along the bud cortex and consequently the movement of the mitotic spindle to the bud neck. The chain is Nuclear distribution protein nudE homolog 1 (NDL1) from Saccharomyces cerevisiae (strain ATCC 204508 / S288c) (Baker's yeast).